Reading from the N-terminus, the 509-residue chain is Activin receptor type-1 (509 aa).

A signal peptide spans M1–S20. Topologically, residues M21–E123 are extracellular. Residue N102 is glycosylated (N-linked (GlcNAc...) asparagine). Residues V124 to L146 form a helical membrane-spanning segment. Residues R147–C509 lie on the Cytoplasmic side of the membrane. Residues S178–Q207 enclose the GS domain. The 295-residue stretch at I208–L502 folds into the Protein kinase domain. ATP-binding positions include V214–V222 and K235. D336 acts as the Proton acceptor in catalysis. Phosphoserine is present on S501.

It belongs to the protein kinase superfamily. TKL Ser/Thr protein kinase family. TGFB receptor subfamily. Interacts with FKBP1A. Interacts with FCHO1. Interacts with CLU. Interacts with type II receptors AMHR2 and ACVR2A. Interacts with BMP7. Interacts with GDF2/BMP9. Interacts with BMP6 (when glycosylated); the interaction may induce HAMP expression. Interacts with TSC22D1/TSC-22. It depends on Mg(2+) as a cofactor. Mn(2+) serves as cofactor. Expressed in normal parenchymal cells, endothelial cells, fibroblasts and tumor-derived epithelial cells.

The protein resides in the membrane. It carries out the reaction L-threonyl-[receptor-protein] + ATP = O-phospho-L-threonyl-[receptor-protein] + ADP + H(+). It catalyses the reaction L-seryl-[receptor-protein] + ATP = O-phospho-L-seryl-[receptor-protein] + ADP + H(+). Its function is as follows. Bone morphogenetic protein (BMP) type I receptor that is involved in a wide variety of biological processes, including bone, heart, cartilage, nervous, and reproductive system development and regulation. As a type I receptor, forms heterotetrameric receptor complexes with the type II receptors AMHR2, ACVR2A or ACVR2B. Upon binding of ligands such as BMP7 or GDF2/BMP9 to the heteromeric complexes, type II receptors transphosphorylate ACVR1 intracellular domain. In turn, ACVR1 kinase domain is activated and subsequently phosphorylates SMAD1/5/8 proteins that transduce the signal. In addition to its role in mediating BMP pathway-specific signaling, suppresses TGFbeta/activin pathway signaling by interfering with the binding of activin to its type II receptor. Besides canonical SMAD signaling, can activate non-canonical pathways such as p38 mitogen-activated protein kinases/MAPKs. May promote the expression of HAMP, potentially via its interaction with BMP6. This chain is Activin receptor type-1 (ACVR1), found in Homo sapiens (Human).